Reading from the N-terminus, the 211-residue chain is NADH-quinone oxidoreductase subunit I (211 aa).

Residues 1-27 (MANTDRPALPHKRAVPPSRADSGPRRR) form a disordered region. 2 consecutive 4Fe-4S ferredoxin-type domains span residues 71–101 (LNRY…VEGA) and 117–146 (RVYQ…MTYD). [4Fe-4S] cluster-binding residues include Cys81, Cys84, Cys87, Cys91, Cys126, Cys129, Cys132, and Cys136.

Belongs to the complex I 23 kDa subunit family. In terms of assembly, NDH-1 is composed of 14 different subunits. Subunits NuoA, H, J, K, L, M, N constitute the membrane sector of the complex. Requires [4Fe-4S] cluster as cofactor.

Its subcellular location is the cell membrane. It carries out the reaction a quinone + NADH + 5 H(+)(in) = a quinol + NAD(+) + 4 H(+)(out). Its function is as follows. NDH-1 shuttles electrons from NADH, via FMN and iron-sulfur (Fe-S) centers, to quinones in the respiratory chain. The immediate electron acceptor for the enzyme in this species is believed to be menaquinone. Couples the redox reaction to proton translocation (for every two electrons transferred, four hydrogen ions are translocated across the cytoplasmic membrane), and thus conserves the redox energy in a proton gradient. This is NADH-quinone oxidoreductase subunit I from Mycobacterium bovis (strain ATCC BAA-935 / AF2122/97).